The following is a 267-amino-acid chain: Very long chain fatty acid elongase 6 (267 aa).

A glycan (N-linked (GlcNAc...) asparagine) is linked at asparagine 2. Transmembrane regions (helical) follow at residues 34–51 (FLFS…RHLM), 70–90 (LAVF…YILM), 111–131 (FWAY…IFII), 136–156 (KLIF…WYSY), 159–179 (MVAG…VMYS), 197–217 (FITL…YLVF), and 234–254 (IFWS…FFFE).

This sequence belongs to the ELO family. ELOVL6 subfamily. N-Glycosylated. Highly expressed in adrenal gland, liver, white adipose tissue (WAT), adult and fetal brain, cerebellum, spinal cord, testis, skin and peripheral nerve; where lipogenesis and steroidogenesis are active. Weakly expressed in kidney, heart, skeletal muscle, lung, and spleen.

Its subcellular location is the endoplasmic reticulum membrane. The catalysed reaction is a very-long-chain acyl-CoA + malonyl-CoA + H(+) = a very-long-chain 3-oxoacyl-CoA + CO2 + CoA. The enzyme catalyses hexadecanoyl-CoA + malonyl-CoA + H(+) = 3-oxooctadecanoyl-CoA + CO2 + CoA. It carries out the reaction (9Z)-hexadecenoyl-CoA + malonyl-CoA + H(+) = 3-oxo-(11Z)-octadecenoyl-CoA + CO2 + CoA. It catalyses the reaction dodecanoyl-CoA + malonyl-CoA + H(+) = 3-oxotetradecanoyl-CoA + CO2 + CoA. The catalysed reaction is tetradecanoyl-CoA + malonyl-CoA + H(+) = 3-oxohexadecanoyl-CoA + CO2 + CoA. The enzyme catalyses (9Z)-octadecenoyl-CoA + malonyl-CoA + H(+) = 3-oxo-(11Z)-eicosenoyl-CoA + CO2 + CoA. It carries out the reaction (9Z,12Z)-octadecadienoyl-CoA + malonyl-CoA + H(+) = (11Z,14Z)-3-oxoicosa-11,14-dienoyl-CoA + CO2 + CoA. It catalyses the reaction (9Z,12Z,15Z)-octadecatrienoyl-CoA + malonyl-CoA + H(+) = (11Z,14Z,17Z)-3-oxoeicosatrienoyl-CoA + CO2 + CoA. It participates in lipid metabolism; fatty acid biosynthesis. The reaction is stimulated by the presence of HSD17B12, the enzyme catalyzing the second step of the elongation cycle. In terms of biological role, catalyzes the first and rate-limiting reaction of the four reactions that constitute the long-chain fatty acids elongation cycle. This endoplasmic reticulum-bound enzymatic process allows the addition of 2 carbons to the chain of long- and very long-chain fatty acids (VLCFAs) per cycle. Condensing enzyme that elongates fatty acids with 12, 14 and 16 carbons with higher activity toward C16:0 acyl-CoAs. Catalyzes the synthesis of unsaturated C16 long chain fatty acids and, to a lesser extent, C18:0 and those with low desaturation degree. May participate in the production of saturated and monounsaturated VLCFAs of different chain lengths that are involved in multiple biological processes as precursors of membrane lipids and lipid mediators. This is Very long chain fatty acid elongase 6 from Mus musculus (Mouse).